The following is a 34-amino-acid chain: Photosystem I reaction center subunit XII (34 aa).

A helical membrane pass occupies residues 10 to 32 (VFVALVVAAHAAVLALRLSISLY).

This sequence belongs to the PsaM family.

It is found in the cellular thylakoid membrane. This Parasynechococcus marenigrum (strain WH8102) protein is Photosystem I reaction center subunit XII.